A 597-amino-acid polypeptide reads, in one-letter code: Elongation factor 4 (597 aa).

The region spanning 2–184 (DHIRNFSIIA…SLIAKVPPPK (183 aa)) is the tr-type G domain. Residues 14 to 19 (DHGKST) and 131 to 134 (NKID) each bind GTP.

It belongs to the TRAFAC class translation factor GTPase superfamily. Classic translation factor GTPase family. LepA subfamily.

It localises to the cell inner membrane. It carries out the reaction GTP + H2O = GDP + phosphate + H(+). Its function is as follows. Required for accurate and efficient protein synthesis under certain stress conditions. May act as a fidelity factor of the translation reaction, by catalyzing a one-codon backward translocation of tRNAs on improperly translocated ribosomes. Back-translocation proceeds from a post-translocation (POST) complex to a pre-translocation (PRE) complex, thus giving elongation factor G a second chance to translocate the tRNAs correctly. Binds to ribosomes in a GTP-dependent manner. In Burkholderia lata (strain ATCC 17760 / DSM 23089 / LMG 22485 / NCIMB 9086 / R18194 / 383), this protein is Elongation factor 4.